The chain runs to 286 residues: Toxin zeta (286 aa).

Residue 39–46 (GQPGSGKT) coordinates ATP. The interval 249-286 (MVQNQHQETPEFKAIQQKMESLQPPTPPIPKTPKLPGI) is disordered. Positions 272-286 (PPTPPIPKTPKLPGI) are enriched in pro residues.

It belongs to the zeta toxin family. As to quaternary structure, in the presence of the epsilon antitoxin, forms an inactive PezA(2)PezT(2) heterotetramer.

The catalysed reaction is UDP-N-acetyl-alpha-D-glucosamine + ATP = UDP-N-acetyl-alpha-D-glucosamine 3'-phosphate + ADP + H(+). Functionally, toxic component of a type II toxin-antitoxin (TA) system. Phosphorylates UDP-N-acetyl-D-glucosamine (UNAG) on the 3'-hydroxyl group of the N-acetyl-D-glucosamine moiety, yielding UNAG-3P. UNAG-3P inhibits MurA, the first committed step in cell wall synthesis, which is then blocked. Phosphorylation is inhibited by cognate epsilon antitoxin. Part of a postsegregational killing (PSK) system involved in the killing of plasmid-free cells. The zeta toxin induces programmed cell death. The protein is Toxin zeta of Enterococcus hirae.